The chain runs to 329 residues: Sideroflexin (329 aa).

5 consecutive transmembrane segments (helical) span residues alanine 95–glycine 115, isoleucine 147–tryptophan 167, leucine 183–methionine 203, phenylalanine 238–phenylalanine 258, and leucine 274–phenylalanine 294.

This sequence belongs to the sideroflexin family.

The protein resides in the mitochondrion membrane. In terms of biological role, mitochondrial amino-acid transporter that mediates transport of serine into mitochondria. The sequence is that of Sideroflexin from Dictyostelium discoideum (Social amoeba).